The following is a 212-amino-acid chain: 2,3-bisphosphoglycerate-dependent phosphoglycerate mutase (212 aa).

Substrate contacts are provided by residues 9-16 (RHGQSEWN), 22-23 (TG), Arg61, 88-91 (ERDY), Lys99, 115-116 (RR), and 159-160 (GN). The active-site Tele-phosphohistidine intermediate is the His10. The Proton donor/acceptor role is filled by Glu88.

This sequence belongs to the phosphoglycerate mutase family. BPG-dependent PGAM subfamily. In terms of assembly, homodimer.

The catalysed reaction is (2R)-2-phosphoglycerate = (2R)-3-phosphoglycerate. The protein operates within carbohydrate degradation; glycolysis; pyruvate from D-glyceraldehyde 3-phosphate: step 3/5. Catalyzes the interconversion of 2-phosphoglycerate and 3-phosphoglycerate. In Methylorubrum populi (strain ATCC BAA-705 / NCIMB 13946 / BJ001) (Methylobacterium populi), this protein is 2,3-bisphosphoglycerate-dependent phosphoglycerate mutase.